A 306-amino-acid chain; its full sequence is GTP cyclohydrolase FolE2 (306 aa).

The protein belongs to the GTP cyclohydrolase IV family.

The catalysed reaction is GTP + H2O = 7,8-dihydroneopterin 3'-triphosphate + formate + H(+). Its pathway is cofactor biosynthesis; 7,8-dihydroneopterin triphosphate biosynthesis; 7,8-dihydroneopterin triphosphate from GTP: step 1/1. Converts GTP to 7,8-dihydroneopterin triphosphate. This is GTP cyclohydrolase FolE2 from Pseudoalteromonas atlantica (strain T6c / ATCC BAA-1087).